The sequence spans 293 residues: ATP synthase gamma chain (293 aa).

Belongs to the ATPase gamma chain family. As to quaternary structure, F-type ATPases have 2 components, CF(1) - the catalytic core - and CF(0) - the membrane proton channel. CF(1) has five subunits: alpha(3), beta(3), gamma(1), delta(1), epsilon(1). CF(0) has three main subunits: a, b and c.

The protein localises to the cell inner membrane. Produces ATP from ADP in the presence of a proton gradient across the membrane. The gamma chain is believed to be important in regulating ATPase activity and the flow of protons through the CF(0) complex. The protein is ATP synthase gamma chain of Beijerinckia indica subsp. indica (strain ATCC 9039 / DSM 1715 / NCIMB 8712).